The primary structure comprises 396 residues: Phosphoglycerate kinase (396 aa).

Substrate-binding positions include 21–23 (DFN), Arg-36, 59–62 (HLGK), Arg-119, and Arg-156. ATP is bound by residues Lys-206, Glu-325, and 352-355 (GGDS).

It belongs to the phosphoglycerate kinase family. Monomer.

It localises to the cytoplasm. It catalyses the reaction (2R)-3-phosphoglycerate + ATP = (2R)-3-phospho-glyceroyl phosphate + ADP. The protein operates within carbohydrate degradation; glycolysis; pyruvate from D-glyceraldehyde 3-phosphate: step 2/5. This is Phosphoglycerate kinase from Staphylococcus haemolyticus (strain JCSC1435).